A 680-amino-acid chain; its full sequence is DNA-directed RNA polymerase subunit beta' (680 aa).

Residues Cys69, Cys71, Cys87, and Cys90 each coordinate Zn(2+). Mg(2+) is bound by residues Asp489, Asp491, and Asp493.

Belongs to the RNA polymerase beta' chain family. RpoC1 subfamily. As to quaternary structure, in plastids the minimal PEP RNA polymerase catalytic core is composed of four subunits: alpha, beta, beta', and beta''. When a (nuclear-encoded) sigma factor is associated with the core the holoenzyme is formed, which can initiate transcription. The cofactor is Mg(2+). Requires Zn(2+) as cofactor.

The protein resides in the plastid. It localises to the chloroplast. The catalysed reaction is RNA(n) + a ribonucleoside 5'-triphosphate = RNA(n+1) + diphosphate. In terms of biological role, DNA-dependent RNA polymerase catalyzes the transcription of DNA into RNA using the four ribonucleoside triphosphates as substrates. The polypeptide is DNA-directed RNA polymerase subunit beta' (Nasturtium officinale (Watercress)).